A 256-amino-acid polypeptide reads, in one-letter code: Protein FixA (256 aa).

Belongs to the ETF beta-subunit/FixA family. As to quaternary structure, heterodimer of FixA and FixB.

The protein operates within amine and polyamine metabolism; carnitine metabolism. In terms of biological role, required for anaerobic carnitine reduction. May bring reductant to CaiA. This is Protein FixA from Salmonella paratyphi B (strain ATCC BAA-1250 / SPB7).